The chain runs to 414 residues: 2-acylphloroglucinol 4-prenyltransferase (414 aa).

A chloroplast-targeting transit peptide spans 1–86 (MELSSVSSFS…LKPLSIFSCK (86 aa)). A run of 8 helical transmembrane segments spans residues 153–173 (FSWPLIFRALLGMLAILGSCF), 201–221 (ISVESAWLLTLSPAIIGFILI), 229–249 (LLTSLYCLAILSGTIYSVPPF), 256–276 (ITAFLCILMIHAGLNFSVYYA), 281–301 (LGLAFVWSPSFSFITAFITFM), 336–356 (LLGTGLLLLNYVAAISTAIIW), 359–379 (AFKSNIMLLSHAILAFSLFFQ), and 394–414 (KSFYEFIWILFSAEYVVYLFI).

The protein belongs to the UbiA prenyltransferase family. Component an active demethylxanthohumol (DMX) biosynthetic metabolon in glandular trichomes (lupulin glands) that encompasses a chalcone synthase (CHS) and a membrane-bound prenyltransferase. Interacts with PT2, forming a functional metabolon. Interacts with CHIL2; this interaction promotes catalytic activity. Mg(2+) serves as cofactor. As to expression, expressed in trichomes.

It localises to the plastid. The protein localises to the chloroplast membrane. The enzyme catalyses 2',4,4',6'-tetrahydroxychalcone + dimethylallyl diphosphate = desmethylxanthohumol + diphosphate. It catalyses the reaction a 2-acylphloroglucinol + dimethylallyl diphosphate = a 2-acyl-4-prenylphloroglucinol + diphosphate. Its pathway is secondary metabolite biosynthesis. Stimulated by CHIL2 but inhibited by CHIL1. In terms of biological role, involved in the biosynthesis of prenylated phenolics natural products which contribute to the bitter taste of beer and display broad biological activities. Catalyzes the first prenylation step in the beta-bitter acid pathway. Uses dimethylallyl diphosphate (DMAPP) as the prenyl donor. The polypeptide is 2-acylphloroglucinol 4-prenyltransferase (Humulus lupulus (European hop)).